Here is a 485-residue protein sequence, read N- to C-terminus: Cobyric acid synthase (485 aa).

The GATase cobBQ-type domain occupies 248 to 435; that stretch reads RLKVAVAVPP…LHGLFESPAA (188 aa). The active-site Nucleophile is the Cys-329. His-427 is an active-site residue.

The protein belongs to the CobB/CobQ family. CobQ subfamily.

It participates in cofactor biosynthesis; adenosylcobalamin biosynthesis. Functionally, catalyzes amidations at positions B, D, E, and G on adenosylcobyrinic A,C-diamide. NH(2) groups are provided by glutamine, and one molecule of ATP is hydrogenolyzed for each amidation. This chain is Cobyric acid synthase, found in Azotobacter vinelandii (strain DJ / ATCC BAA-1303).